The sequence spans 622 residues: MNRYTTMKQLGDGTYGSVLMGKSNESGELVAIKRMKRKFYSWDECMNLREVKSLKKLNHANVIKLKEVIRENDHLYFVFEYMKENLYQLMKDRNKLFPESVIRNIMYQILQGLAFIHKHGFFHRDMKPENLLCMGPELVKIADFGLARELRSQPPYTDYVSTRWYRAPEVLLRSSVYSSPIDVWAVGSIMAELYTFRPLFPGTSEVDEIFKICQVLGTPKKSDWPEGYQLASSMNFRFPQCIPINLKTLIPNASSEAIQLMTEMLNWDPKKRPTASQALKHPYFQVGQVLGSSAHHLDTKQTLHKQLQPLEPKPSSSERDPKPLPNILDQPAGQPQPKQGHQPLQTIQPPQNTVTHPPPKQQGHQKPPQTMFPSIIKTIPVNSVSTLGHKGARRRWGQTVFKSGDSCDDIEDDLGASHSKKPSMEACKEKKKESPFRFPDSGLPVSNHFKGENRNLHASVSLKSDPNLSTASTAKQYYLKQSRYLPGVNPKNVSLVAGGKDINSHSWNNQLFPKSLGSMGADLSFKRSNAAGNLGSYTTYNQTGYMPSFLKKEVGSAGQRIQLAPLGASASDYTWSTKTGRGQFSGRTYNPTAKNLNIVNRTQPVPSVHGRTDWVAKYGGHR.

The Protein kinase domain maps to 4–284 (YTTMKQLGDG…ASQALKHPYF (281 aa)). ATP-binding positions include 10-18 (LGDGTYGSV) and Lys33. The Proton acceptor role is filled by Asp125. A Phosphothreonine; by autocatalysis modification is found at Thr157. Tyr159 carries the phosphotyrosine; by autocatalysis modification. Positions 301–371 (QTLHKQLQPL…QGHQKPPQTM (71 aa)) are disordered. Residues 336 to 355 (QPKQGHQPLQTIQPPQNTVT) show a composition bias toward polar residues.

Belongs to the protein kinase superfamily. CMGC Ser/Thr protein kinase family. CDC2/CDKX subfamily. As to quaternary structure, interacts with AR and CDK20. Found in a complex containing MAK, AR and NCOA3. Interacts with FZR1 (via WD repeats). Interacts with RP1. Mg(2+) is required as a cofactor. In terms of processing, autophosphorylated. Phosphorylated on serine and threonine residues. In terms of tissue distribution, in pre- and postmeiotic male germ cells in testis. In photoreceptor cells of the retina and in the olfactory receptors, and in certain epithelia of the respiratory tract and choroid plexus (brain).

The protein localises to the nucleus. The protein resides in the cytoplasm. It is found in the cytoskeleton. It localises to the microtubule organizing center. Its subcellular location is the centrosome. The protein localises to the spindle. The protein resides in the midbody. It is found in the cell projection. It localises to the cilium. Its subcellular location is the photoreceptor outer segment. The protein localises to the photoreceptor inner segment. The catalysed reaction is L-seryl-[protein] + ATP = O-phospho-L-seryl-[protein] + ADP + H(+). The enzyme catalyses L-threonyl-[protein] + ATP = O-phospho-L-threonyl-[protein] + ADP + H(+). Functionally, essential for the regulation of ciliary length and required for the long-term survival of photoreceptors. Could have an important function in sensory cells and in spermatogenesis. May participate in signaling pathways used in visual and olfactory sensory transduction. Phosphorylates FZR1 in a cell cycle-dependent manner. Plays a role in the transcriptional coactivation of AR. This is Serine/threonine-protein kinase MAK (Mak) from Mus musculus (Mouse).